The following is a 547-amino-acid chain: Sesquiterpene synthase TPS3 (547 aa).

Residues arginine 265, aspartate 302, aspartate 306, arginine 443, and aspartate 446 each coordinate (2E,6E)-farnesyl diphosphate. Residues aspartate 302 and aspartate 306 each coordinate Mg(2+). A DDXXD motif motif is present at residues 302 to 306 (DDIYD). Positions 446, 450, and 454 each coordinate Mg(2+).

The protein belongs to the terpene synthase family. Tpsb subfamily. Monomer. Requires Mg(2+) as cofactor.

The protein localises to the cytoplasm. It catalyses the reaction (2E,6E)-farnesyl diphosphate = (1S,5S,6R)-alpha-bergamotene + diphosphate. The protein operates within secondary metabolite biosynthesis; terpenoid biosynthesis. In terms of biological role, sesquiterpene synthase involved in the biosynthesis of volatile organic compounds. Mediates the conversion of (2E,6E)-farnesyl diphosphate (FPP) into alpha-bergamotene. Does not use (2E)-geranyl diphosphate (GPP) as substrate. This is Sesquiterpene synthase TPS3 from Cananga odorata (Ylang-ylang tree).